The chain runs to 105 residues: Nucleoid-associated protein MW0434 (105 aa).

Residues 1 to 33 (MRGGGNMQQMMKQMQKMQKKMAQEQEKLKEERI) form a disordered region. Residues 7–16 (MQQMMKQMQK) show a composition bias toward low complexity. Positions 21–33 (MAQEQEKLKEERI) are enriched in basic and acidic residues.

It belongs to the YbaB/EbfC family. In terms of assembly, homodimer.

The protein localises to the cytoplasm. Its subcellular location is the nucleoid. Functionally, binds to DNA and alters its conformation. May be involved in regulation of gene expression, nucleoid organization and DNA protection. This chain is Nucleoid-associated protein MW0434, found in Staphylococcus aureus (strain MW2).